Here is a 388-residue protein sequence, read N- to C-terminus: Nuclear hormone receptor family member nhr-16 (388 aa).

Positions 11–86 (FLKCAICQES…VGMNPAGVQQ (76 aa)) form a DNA-binding region, nuclear receptor. 2 NR C4-type zinc fingers span residues 14 to 34 (CAICQESAEGFHFGAEACRAC) and 50 to 74 (CQGNNDCDVTINIRCMCRACRYIKC). Residues 115–387 (PPSSLMLHIP…DEFYNLMSGR (273 aa)) form the NR LBD domain.

It belongs to the nuclear hormone receptor family.

It localises to the nucleus. Orphan nuclear receptor. In Caenorhabditis elegans, this protein is Nuclear hormone receptor family member nhr-16 (nhr-16).